The primary structure comprises 84 residues: Neurotoxin BmK-M10 (84 aa).

An N-terminal signal peptide occupies residues 1–19; it reads MNYLVMISFALLLMKGVES. The LCN-type CS-alpha/beta domain occupies 21–83; the sequence is RDAYIAKPEN…VPIRVPGKCQ (63 aa). 4 disulfide bridges follow: Cys-31/Cys-82, Cys-35/Cys-55, Cys-41/Cys-65, and Cys-45/Cys-67. Arg-84 is a propeptide (removed by a carboxypeptidase).

As to expression, expressed by the venom gland.

It localises to the secreted. In terms of biological role, binds to voltage-dependent sodium channels (Nav) and voltage-dependent delayed rectifier potassium channels and inhibits the inactivation of the activated channels, thereby blocking neuronal transmission. Administration to mice at a dosage of 0.8 mg/kg produces an analgesic effect. The protein is Neurotoxin BmK-M10 of Olivierus martensii (Manchurian scorpion).